The primary structure comprises 125 residues: Lymphocyte antigen 6 complex locus protein G6c (125 aa).

The signal sequence occupies residues 1–18 (MRALLLLSLSALLCWVSA). The region spanning 20–111 (IRCHSCYKLP…PRPTPALTLV (92 aa)) is the UPAR/Ly6 domain. 3 cysteine pairs are disulfide-bonded: cysteine 22-cysteine 47, cysteine 25-cysteine 33, and cysteine 39-cysteine 65. A glycan (N-linked (GlcNAc...) asparagine) is linked at asparagine 88. A disulfide bridge links cysteine 92 with cysteine 97. A lipid anchor (GPI-anchor amidated serine) is attached at serine 99. Residues 100-125 (PAPRPTPALTLVFLTSLAGLGLWLLH) constitute a propeptide, removed in mature form.

Post-translationally, N-glycosylated.

The protein resides in the cell membrane. The polypeptide is Lymphocyte antigen 6 complex locus protein G6c (LY6G6C) (Bos taurus (Bovine)).